Reading from the N-terminus, the 150-residue chain is Interferon antagonist OPG027 (150 aa).

This sequence belongs to the orthopoxvirus OPG027 family.

Its function is as follows. Inhibits antiviral activity induced by type I interferons. Does not block signal transduction of IFN, but is important to counteract the host antiviral state induced by a pre-treatment with IFN. This Vaccinia virus (strain Ankara) (VACV) protein is Interferon antagonist OPG027 (OPG027).